Consider the following 352-residue polypeptide: Diacylglycerol acyltransferase/mycolyltransferase Ag85C (352 aa).

The N-terminal stretch at 1–37 (MSFIEKVRKLRGAAATMPRRLAIAAVGASLLSGVAVA) is a signal peptide. Residue 86 to 87 (LR) coordinates substrate. The tract at residues 102-112 (FEEFYQSGLSV) is fibronectin-binding. 2 residues coordinate substrate: Ser170 and Asn198. The active-site Nucleophile is the Ser170. The active site involves Glu274. Substrate contacts are provided by residues 276-279 (LTLR) and 306-308 (HSW). His306 is an active-site residue. A disordered region spans residues 332 to 352 (TAAPAQPAQPAQPAQPAQPAT). The segment covering 333–352 (AAPAQPAQPAQPAQPAQPAT) has biased composition (low complexity).

Belongs to the mycobacterial A85 antigen family. As to quaternary structure, homodimer.

The protein resides in the secreted. It catalyses the reaction an acyl-CoA + a 1,2-diacyl-sn-glycerol = a triacyl-sn-glycerol + CoA. The enzyme catalyses 2 alpha,alpha'-trehalose 6-mycolate = alpha,alpha'-trehalose 6,6'-bismycolate + alpha,alpha-trehalose. In terms of biological role, the antigen 85 proteins (FbpA, FbpB, FbpC) are responsible for the high affinity of mycobacteria to fibronectin, a large adhesive glycoprotein, which facilitates the attachment of M.tuberculosis to murine alveolar macrophages (AMs). They also help to maintain the integrity of the cell wall by catalyzing the transfer of mycolic acids to cell wall arabinogalactan and through the synthesis of alpha,alpha-trehalose dimycolate (TDM, cord factor). They catalyze the transfer of a mycoloyl residue from one molecule of alpha,alpha-trehalose monomycolate (TMM) to another TMM, leading to the formation of TDM. This is Diacylglycerol acyltransferase/mycolyltransferase Ag85C (fbpC) from Mycobacterium avium.